A 372-amino-acid polypeptide reads, in one-letter code: Heat-inducible transcription repressor HrcA (372 aa).

The tract at residues valine 296–methionine 331 is disordered.

This sequence belongs to the HrcA family.

Its function is as follows. Negative regulator of class I heat shock genes (grpE-dnaK-dnaJ and groELS operons). Prevents heat-shock induction of these operons. This is Heat-inducible transcription repressor HrcA from Bifidobacterium longum subsp. infantis (strain ATCC 15697 / DSM 20088 / JCM 1222 / NCTC 11817 / S12).